The primary structure comprises 202 residues: Holliday junction branch migration complex subunit RuvA (202 aa).

The interval methionine 1–alanine 64 is domain I. Residues threonine 65 to proline 143 form a domain II region. The interval leucine 144–aspartate 149 is flexible linker. The segment at alanine 150 to glutamate 202 is domain III.

Belongs to the RuvA family. As to quaternary structure, homotetramer. Forms an RuvA(8)-RuvB(12)-Holliday junction (HJ) complex. HJ DNA is sandwiched between 2 RuvA tetramers; dsDNA enters through RuvA and exits via RuvB. An RuvB hexamer assembles on each DNA strand where it exits the tetramer. Each RuvB hexamer is contacted by two RuvA subunits (via domain III) on 2 adjacent RuvB subunits; this complex drives branch migration. In the full resolvosome a probable DNA-RuvA(4)-RuvB(12)-RuvC(2) complex forms which resolves the HJ.

The protein resides in the cytoplasm. Its function is as follows. The RuvA-RuvB-RuvC complex processes Holliday junction (HJ) DNA during genetic recombination and DNA repair, while the RuvA-RuvB complex plays an important role in the rescue of blocked DNA replication forks via replication fork reversal (RFR). RuvA specifically binds to HJ cruciform DNA, conferring on it an open structure. The RuvB hexamer acts as an ATP-dependent pump, pulling dsDNA into and through the RuvAB complex. HJ branch migration allows RuvC to scan DNA until it finds its consensus sequence, where it cleaves and resolves the cruciform DNA. This is Holliday junction branch migration complex subunit RuvA from Salinibacter ruber (strain DSM 13855 / M31).